The chain runs to 785 residues: Mitochondrial intermediate peptidase (785 aa).

Residues 1–43 (MLTRPAQNALLKSMQPLFRFRGCLLAKSTSTPRRDISTSSRKL) constitute a mitochondrion transit peptide. Histidine 567 contributes to the Zn(2+) binding site. Residue glutamate 568 is part of the active site. Zn(2+)-binding residues include histidine 571 and histidine 574.

This sequence belongs to the peptidase M3 family. The cofactor is Zn(2+).

The protein resides in the mitochondrion matrix. It carries out the reaction Release of an N-terminal octapeptide as second stage of processing of some proteins imported into the mitochondrion.. Cleaves proteins, imported into the mitochondrion, to their mature size. While most mitochondrial precursor proteins are processed to the mature form in one step by mitochondrial processing peptidase (MPP), the sequential cleavage by MIP of an octapeptide after initial processing by MPP is a required step for a subgroup of nuclear-encoded precursor proteins destined for the matrix or the inner membrane. This is Mitochondrial intermediate peptidase (OCT1) from Pleurotus djamor (Pink oyster mushroom).